Consider the following 72-residue polypeptide: MTNQYPPQQDRPQWYAGSPYPVAPPPMPQPTVMPVRTNHAMHLLLSLITCGMWLPVWVIMAMINSGRTRKVY.

In Mycobacterium phage L5 (Mycobacteriophage L5), this protein is Gene 35 protein (35).